Consider the following 107-residue polypeptide: Translation initiation factor IF-1, chloroplastic (107 aa).

Residues 8–83 (REKKNPREAK…SKGRIIYRLP (76 aa)) form the S1-like domain.

Belongs to the IF-1 family. As to quaternary structure, component of the 30S ribosomal translation pre-initiation complex which assembles on the 30S ribosome in the order IF-2 and IF-3, IF-1 and N-formylmethionyl-tRNA(fMet); mRNA recruitment can occur at any time during PIC assembly.

The protein resides in the plastid. It is found in the chloroplast. One of the essential components for the initiation of protein synthesis. Stabilizes the binding of IF-2 and IF-3 on the 30S subunit to which N-formylmethionyl-tRNA(fMet) subsequently binds. Helps modulate mRNA selection, yielding the 30S pre-initiation complex (PIC). Upon addition of the 50S ribosomal subunit IF-1, IF-2 and IF-3 are released leaving the mature 70S translation initiation complex. The protein is Translation initiation factor IF-1, chloroplastic of Lolium perenne (Perennial ryegrass).